We begin with the raw amino-acid sequence, 45 residues long: Photosystem II reaction center protein K (45 aa).

The propeptide occupies 1–8 (MEAALLLA). The helical transmembrane segment at 24–44 (LPIIPLFFLALAFVWQAAVGF) threads the bilayer.

This sequence belongs to the PsbK family. As to quaternary structure, PSII is composed of 1 copy each of membrane proteins PsbA, PsbB, PsbC, PsbD, PsbE, PsbF, PsbH, PsbI, PsbJ, PsbK, PsbL, PsbM, PsbT, PsbX, PsbY, PsbZ, Psb30/Ycf12, peripheral proteins PsbO, CyanoQ (PsbQ), PsbU, PsbV and a large number of cofactors. It forms dimeric complexes.

It is found in the cellular thylakoid membrane. Functionally, one of the components of the core complex of photosystem II (PSII). PSII is a light-driven water:plastoquinone oxidoreductase that uses light energy to abstract electrons from H(2)O, generating O(2) and a proton gradient subsequently used for ATP formation. It consists of a core antenna complex that captures photons, and an electron transfer chain that converts photonic excitation into a charge separation. This chain is Photosystem II reaction center protein K, found in Rippkaea orientalis (strain PCC 8801 / RF-1) (Cyanothece sp. (strain PCC 8801)).